The chain runs to 121 residues: Large ribosomal subunit protein bL12 (121 aa).

The protein belongs to the bacterial ribosomal protein bL12 family. As to quaternary structure, homodimer. Part of the ribosomal stalk of the 50S ribosomal subunit. Forms a multimeric L10(L12)X complex, where L10 forms an elongated spine to which 2 to 4 L12 dimers bind in a sequential fashion. Binds GTP-bound translation factors.

Forms part of the ribosomal stalk which helps the ribosome interact with GTP-bound translation factors. Is thus essential for accurate translation. In Pseudomonas fluorescens (strain Pf0-1), this protein is Large ribosomal subunit protein bL12.